Consider the following 114-residue polypeptide: Iron-sulfur cluster insertion protein ErpA (114 aa).

Iron-sulfur cluster is bound by residues cysteine 42, cysteine 106, and cysteine 108.

Belongs to the HesB/IscA family. Homodimer. Iron-sulfur cluster is required as a cofactor.

Its function is as follows. Required for insertion of 4Fe-4S clusters for at least IspG. The sequence is that of Iron-sulfur cluster insertion protein ErpA from Yersinia enterocolitica serotype O:8 / biotype 1B (strain NCTC 13174 / 8081).